The primary structure comprises 143 residues: Large ribosomal subunit protein uL11 (143 aa).

Belongs to the universal ribosomal protein uL11 family. Part of the ribosomal stalk of the 50S ribosomal subunit. Interacts with L10 and the large rRNA to form the base of the stalk. L10 forms an elongated spine to which L12 dimers bind in a sequential fashion forming a multimeric L10(L12)X complex. In terms of processing, one or more lysine residues are methylated.

Functionally, forms part of the ribosomal stalk which helps the ribosome interact with GTP-bound translation factors. This chain is Large ribosomal subunit protein uL11, found in Psychrobacter cryohalolentis (strain ATCC BAA-1226 / DSM 17306 / VKM B-2378 / K5).